A 510-amino-acid polypeptide reads, in one-letter code: Ankyrin repeat domain-containing protein 13C-A (510 aa).

Over residues 1-19 (MTGEKIRSLHKDQKPSKDE) the composition is skewed to basic and acidic residues. The disordered stretch occupies residues 1–35 (MTGEKIRSLHKDQKPSKDEDLLEPDEEATAGGTFT). 3 ANK repeats span residues 80 to 111 (DVYF…QKDS), 112 to 141 (HGNT…PVKV), and 145 to 174 (QGWS…QQSR).

The protein localises to the endoplasmic reticulum membrane. Its function is as follows. Acts as a molecular chaperone for G protein-coupled receptors, regulating their biogenesis and exit from the ER. This chain is Ankyrin repeat domain-containing protein 13C-A (ankrd13c-a), found in Xenopus laevis (African clawed frog).